The chain runs to 481 residues: Glutamyl-tRNA(Gln) amidotransferase subunit A (481 aa).

Catalysis depends on charge relay system residues Lys-76 and Ser-151. Ser-175 functions as the Acyl-ester intermediate in the catalytic mechanism.

It belongs to the amidase family. GatA subfamily. In terms of assembly, heterotrimer of A, B and C subunits.

The catalysed reaction is L-glutamyl-tRNA(Gln) + L-glutamine + ATP + H2O = L-glutaminyl-tRNA(Gln) + L-glutamate + ADP + phosphate + H(+). In terms of biological role, allows the formation of correctly charged Gln-tRNA(Gln) through the transamidation of misacylated Glu-tRNA(Gln) in organisms which lack glutaminyl-tRNA synthetase. The reaction takes place in the presence of glutamine and ATP through an activated gamma-phospho-Glu-tRNA(Gln). In Neisseria gonorrhoeae (strain ATCC 700825 / FA 1090), this protein is Glutamyl-tRNA(Gln) amidotransferase subunit A.